A 255-amino-acid chain; its full sequence is Enolase-phosphatase E1 (255 aa).

Mg(2+) is bound by residues Asp-22 and Glu-24. Substrate-binding positions include 136-137 (SS) and Lys-173. Position 199 (Asp-199) interacts with Mg(2+).

Belongs to the HAD-like hydrolase superfamily. MasA/MtnC family. Monomer. Mg(2+) is required as a cofactor.

It localises to the cytoplasm. The protein localises to the nucleus. The enzyme catalyses 5-methylsulfanyl-2,3-dioxopentyl phosphate + H2O = 1,2-dihydroxy-5-(methylsulfanyl)pent-1-en-3-one + phosphate. The protein operates within amino-acid biosynthesis; L-methionine biosynthesis via salvage pathway; L-methionine from S-methyl-5-thio-alpha-D-ribose 1-phosphate: step 3/6. Its pathway is amino-acid biosynthesis; L-methionine biosynthesis via salvage pathway; L-methionine from S-methyl-5-thio-alpha-D-ribose 1-phosphate: step 4/6. Its function is as follows. Bifunctional enzyme that catalyzes the enolization of 2,3-diketo-5-methylthiopentyl-1-phosphate (DK-MTP-1-P) into the intermediate 2-hydroxy-3-keto-5-methylthiopentenyl-1-phosphate (HK-MTPenyl-1-P), which is then dephosphorylated to form the acireductone 1,2-dihydroxy-3-keto-5-methylthiopentene (DHK-MTPene). The polypeptide is Enolase-phosphatase E1 (Verticillium alfalfae (strain VaMs.102 / ATCC MYA-4576 / FGSC 10136) (Verticillium wilt of alfalfa)).